The primary structure comprises 434 residues: G2/mitotic-specific cyclin-2 (434 aa).

This sequence belongs to the cyclin family. Cyclin AB subfamily. As to quaternary structure, interacts with the CDC2 protein kinase to form a serine/threonine kinase holoenzyme complex also known as maturation promoting factor (MPF). The cyclin subunit imparts substrate specificity to the complex.

Essential for the control of the cell cycle at the G2/M (mitosis) transition. The polypeptide is G2/mitotic-specific cyclin-2 (Medicago sativa subsp. varia (Alfalfa)).